A 199-amino-acid chain; its full sequence is Probable DNA-directed RNA polymerase subunit delta (199 aa).

The HTH HARE-type domain maps to 14 to 81; that stretch reads LSLIEVAHAI…GDNMWGLRAW (68 aa). Acidic residues-rich tracts occupy residues 116–147, 157–171, and 182–199; these read GDDDDVIDYDDDDPEDDDNYDDDDDQDDDTDD, AGVDDTDDDVADETL, and LNDDDDDDDYDDEDDESK. The tract at residues 116–199 is disordered; sequence GDDDDVIDYD…DYDDEDDESK (84 aa).

This sequence belongs to the RpoE family. In terms of assembly, RNAP is composed of a core of 2 alpha, a beta and a beta' subunits. The core is associated with a delta subunit and one of several sigma factors.

Participates in both the initiation and recycling phases of transcription. In the presence of the delta subunit, RNAP displays an increased specificity of transcription, a decreased affinity for nucleic acids, and an increased efficiency of RNA synthesis because of enhanced recycling. The polypeptide is Probable DNA-directed RNA polymerase subunit delta (Lactiplantibacillus plantarum (strain ATCC BAA-793 / NCIMB 8826 / WCFS1) (Lactobacillus plantarum)).